Reading from the N-terminus, the 418-residue chain is Serpin A9 (418 aa).

The first 25 residues, Met-1–Ser-25, serve as a signal peptide directing secretion. Residues Asn-103, Asn-213, and Asn-224 are each glycosylated (N-linked (GlcNAc...) asparagine).

The protein belongs to the serpin family.

The protein resides in the secreted. The polypeptide is Serpin A9 (Serpina9) (Mus musculus (Mouse)).